Reading from the N-terminus, the 133-residue chain is UPF0102 protein Anae109_1947 (133 aa).

It belongs to the UPF0102 family.

The polypeptide is UPF0102 protein Anae109_1947 (Anaeromyxobacter sp. (strain Fw109-5)).